The following is a 376-amino-acid chain: Calcium uniporter protein, mitochondrial (376 aa).

Residues 1–34 constitute a mitochondrion transit peptide; that stretch reads MAAKVCRSVLLLSRSSGAVASSAYPAFGVSSQRH. Over 35-257 the chain is Mitochondrial matrix; it reads QGTKTEALSM…LSKKAERRTT (223 aa). Positions 99–189 are N-terminal MCU domain; that stretch reads VSVVYQNGLP…TSYLVQPPRR (91 aa). Residues 213 to 254 are a coiled coil; sequence TLRIEEHQLNKERELIGRLEDLNSQLQPLEKVKEELSKKAER. A helical membrane pass occupies residues 258 to 280; that stretch reads WVLWGGMAYMATQFGILARLTWW. Topologically, residues 281 to 289 are mitochondrial intermembrane; that stretch reads EYSWDIMEP. The short motif at 284 to 292 is the Selectivity filter element; that stretch reads WDIMEPVTY. Glu-288 serves as a coordination point for Ca(2+). A helical membrane pass occupies residues 290 to 309; the sequence is VTYFITYGTAMAMYAYFVLT. The juxtamembrane helix stretch occupies residues 309–314; the sequence is TRQEYL. Residues 310-376 are Mitochondrial matrix-facing; sequence RQEYLYPDAR…PIQQIDTSKD (67 aa). A coiled-coil region spans residues 336–363; it reads FDIEKYNKLKDAIAEAELDLKRLRDPLQ.

Belongs to the MCU (TC 1.A.77) family. As to quaternary structure, homotetramer. Component of the uniplex complex.

It localises to the mitochondrion inner membrane. The enzyme catalyses Ca(2+)(in) = Ca(2+)(out). Its activity is regulated as follows. MCU channel activity is regulated by the heterodimer composed of micu1 and micu2, which act as calcium-sensors. At low calcium levels, micu1 occludes the pore of the MCU channel, preventing mitochondrial calcium uptake. At higher calcium levels, calcium-binding to micu1 and micu2 induces a conformational change that weakens mcu-micu1 interactions and moves the micu1-micu2 heterodimer away from the pore, allowing calcium permeation through the channel. MCU channel activity is gated by emre/smdt1 via the juxtamembrane helix loop. Inhibited by ruthenium red or its derivative Ru360. Functionally, channel-forming and calcium-conducting subunit of the mitochondrial inner membrane calcium uniporter complex (uniplex), which mediates calcium uptake into the mitochondrial matrix. Mcu channel activity is regulated by the calcium-sensor subunits of the uniplex micu1 and micu2. Mitochondrial calcium homeostasis plays key roles in cellular physiology and regulates ATP production, cytoplasmic calcium signals and activation of cell death pathways. Involved in buffering the amplitude of systolic calcium rises in cardiomyocytes. While dispensable for baseline homeostatic cardiac function, acts as a key regulator of short-term mitochondrial calcium loading underlying a 'fight-or-flight' response during acute stress: acts by mediating a rapid increase of mitochondrial calcium in pacemaker cells. Mitochondrial calcium uptake in skeletal muscle cells is involved in muscle size in adults. The chain is Calcium uniporter protein, mitochondrial from Danio rerio (Zebrafish).